A 428-amino-acid chain; its full sequence is Enolase (428 aa).

Residue Q163 coordinates (2R)-2-phosphoglycerate. E205 acts as the Proton donor in catalysis. Residues D242, E286, and D313 each coordinate Mg(2+). K338, R367, S368, and K389 together coordinate (2R)-2-phosphoglycerate. The active-site Proton acceptor is K338.

The protein belongs to the enolase family. Requires Mg(2+) as cofactor.

The protein localises to the cytoplasm. It is found in the secreted. Its subcellular location is the cell surface. The enzyme catalyses (2R)-2-phosphoglycerate = phosphoenolpyruvate + H2O. Its pathway is carbohydrate degradation; glycolysis; pyruvate from D-glyceraldehyde 3-phosphate: step 4/5. In terms of biological role, catalyzes the reversible conversion of 2-phosphoglycerate (2-PG) into phosphoenolpyruvate (PEP). It is essential for the degradation of carbohydrates via glycolysis. This chain is Enolase, found in Acidovorax sp. (strain JS42).